Reading from the N-terminus, the 436-residue chain is 3-ketoacyl-CoA thiolase (436 aa).

The Acyl-thioester intermediate role is filled by Cys99. Residues His392 and Cys422 each act as proton acceptor in the active site.

It belongs to the thiolase-like superfamily. Thiolase family. In terms of assembly, heterotetramer of two alpha chains (FadJ) and two beta chains (FadI).

The protein localises to the cytoplasm. The catalysed reaction is an acyl-CoA + acetyl-CoA = a 3-oxoacyl-CoA + CoA. Its pathway is lipid metabolism; fatty acid beta-oxidation. Catalyzes the final step of fatty acid oxidation in which acetyl-CoA is released and the CoA ester of a fatty acid two carbons shorter is formed. This is 3-ketoacyl-CoA thiolase from Shewanella sediminis (strain HAW-EB3).